The primary structure comprises 348 residues: NADH-ubiquinone oxidoreductase chain 2 (348 aa).

10 helical membrane passes run 3 to 23, 25 to 45, 59 to 79, 95 to 115, 149 to 171, 178 to 198, 199 to 219, 242 to 262, 274 to 294, and 324 to 344; these read PTVL…TFIG, HWLL…PLMI, YFIT…TNAW, ATLA…HFWL, LNSN…GGLN, ILAY…HYSP, SLTL…FLLF, VIAL…GFMP, SLII…FFYL, and LILL…PLIL.

Belongs to the complex I subunit 2 family.

The protein localises to the mitochondrion inner membrane. It catalyses the reaction a ubiquinone + NADH + 5 H(+)(in) = a ubiquinol + NAD(+) + 4 H(+)(out). Its function is as follows. Core subunit of the mitochondrial membrane respiratory chain NADH dehydrogenase (Complex I) that is believed to belong to the minimal assembly required for catalysis. Complex I functions in the transfer of electrons from NADH to the respiratory chain. The immediate electron acceptor for the enzyme is believed to be ubiquinone. The chain is NADH-ubiquinone oxidoreductase chain 2 (MT-ND2) from Scyliorhinus canicula (Small-spotted catshark).